The chain runs to 726 residues: Quinolinate synthase, chloroplastic (726 aa).

The transit peptide at 1–67 (MDAANLVMKS…KKPSNNSTFT (67 aa)) directs the protein to the chloroplast. Catalysis depends on Cys133, which acts as the Cysteine persulfide intermediate. The iminosuccinate site is built by His283 and Ser309. [4Fe-4S] cluster is bound at residue Cys363. Iminosuccinate contacts are provided by residues 392-394 (YIN) and Ser414. Cys487 lines the [4Fe-4S] cluster pocket. Iminosuccinate-binding positions include 513 to 515 (HFE) and Thr538. [4Fe-4S] cluster is bound at residue Cys643.

This sequence belongs to the quinolinate synthase family. Type 1 subfamily. As to quaternary structure, homodimer. [4Fe-4S] cluster is required as a cofactor.

It is found in the plastid. The protein localises to the chloroplast. It catalyses the reaction iminosuccinate + dihydroxyacetone phosphate = quinolinate + phosphate + 2 H2O + H(+). The protein operates within alkaloid biosynthesis; nicotine biosynthesis. It participates in cofactor biosynthesis; NAD(+) biosynthesis; quinolinate from iminoaspartate: step 1/1. Functionally, involved in the biosynthesis of pyridine alkaloid natural products, leading mainly to the production of anabasine, anatabine, nicotine and nornicotine, effective deterrents against herbivores with antiparasitic and pesticide properties (neurotoxins); nornicotine serves as the precursor in the synthesis of the carcinogen compound N'-nitrosonornicotine (NNN). Catalyzes the condensation of iminoaspartate with dihydroxyacetone phosphate to form quinolinate. The protein is Quinolinate synthase, chloroplastic of Nicotiana tabacum (Common tobacco).